The primary structure comprises 234 residues: Thioredoxin-dependent peroxide reductase, mitochondrial (234 aa).

Residues Met1–Leu30 constitute a mitochondrion transit peptide. Residues Val40 to Phe198 form the Thioredoxin domain. The Cysteine sulfenic acid (-SOH) intermediate role is filled by Cys85.

The protein belongs to the peroxiredoxin family. AhpC/Prx1 subfamily. Homodimer; disulfide-linked, upon oxidation. 6 homodimers assemble to form a ring-like dodecamer. Also exists as a monomer, however the monomeric form is present at a much lower level than the homodimeric form. In terms of tissue distribution, expressed in thoracic flight muscles (at protein level). Detected in the head and body (at protein level).

The protein localises to the mitochondrion. The catalysed reaction is a hydroperoxide + [thioredoxin]-dithiol = an alcohol + [thioredoxin]-disulfide + H2O. Thiol-specific peroxidase that catalyzes the reduction of hydrogen peroxide and organic hydroperoxides to water and alcohols, respectively. Plays a role in cell protection against oxidative stress by detoxifying peroxides. May be involved in aging-associated changes in the responsiveness to oxidative stress. Involved in the maintenance of global thiol redox homeostasis. Functions in the central nervous system (CNS) and in motor neurons and is essential for normal motor function. This chain is Thioredoxin-dependent peroxide reductase, mitochondrial, found in Drosophila melanogaster (Fruit fly).